An 89-amino-acid polypeptide reads, in one-letter code: Elongation factor 1-beta (89 aa).

This sequence belongs to the EF-1-beta/EF-1-delta family.

In terms of biological role, promotes the exchange of GDP for GTP in EF-1-alpha/GDP, thus allowing the regeneration of EF-1-alpha/GTP that could then be used to form the ternary complex EF-1-alpha/GTP/AAtRNA. This chain is Elongation factor 1-beta, found in Methanosarcina mazei (strain ATCC BAA-159 / DSM 3647 / Goe1 / Go1 / JCM 11833 / OCM 88) (Methanosarcina frisia).